Here is a 212-residue protein sequence, read N- to C-terminus: MAESRSPDRGAKEDKPRPRNISREESLQLEGYKHACHALLHAPSQAKLFDRVPIRRVLLMMMRFDGRLGFPGGFVDTRDISLEEGLKRELEEELGPALATVEVTEDDYRSSQVREHPQKCVTHFYIKELKLEEIERIEAEAVNAKDHGLEVMGLIRVPLYTLRDRVGGLPAFLCNNFIGNSKSQLLYALRSLKLLREDQIQEVLKASHRLQY.

Positions 1–23 (MAESRSPDRGAKEDKPRPRNISR) are disordered. The substrate site is built by His-37, Arg-63, and Phe-70. A Nudix hydrolase domain is found at 39-187 (LLHAPSQAKL…IGNSKSQLLY (149 aa)). 4 residues coordinate Mn(2+): Gly-72, Glu-89, Glu-93, and Glu-150. Positions 74 to 95 (FVDTRDISLEEGLKRELEEELG) match the Nudix box motif. Residues Asn-180 and Gln-184 each contribute to the substrate site.

This sequence belongs to the Nudix hydrolase family. NUDT16 subfamily. Homodimer. The cofactor is Mg(2+). It depends on Mn(2+) as a cofactor. Co(2+) serves as cofactor. In terms of tissue distribution, detected in ovary, and at very low levels in epithelial cells (at protein level).

It is found in the nucleus. Its subcellular location is the nucleolus. It localises to the nucleoplasm. The protein localises to the cytoplasm. It catalyses the reaction a 5'-end (N(7)-methyl 5'-triphosphoguanosine)-ribonucleoside in mRNA + H2O = N(7)-methyl-GDP + a 5'-end phospho-ribonucleoside in mRNA + 2 H(+). It carries out the reaction IDP + H2O = IMP + phosphate + H(+). The catalysed reaction is dIDP + H2O = dIMP + phosphate + H(+). The enzyme catalyses a 5'-end NAD(+)-phospho-ribonucleoside in mRNA + H2O = a 5'-end phospho-ribonucleoside in mRNA + NAD(+) + H(+). It catalyses the reaction a 5'-end FAD-phospho-ribonucleoside in mRNA + H2O = a 5'-end phospho-adenosine-phospho-ribonucleoside in mRNA + FMN + 2 H(+). It carries out the reaction a 5'-end CoA-ribonucleoside in mRNA + H2O = a 5'-end phospho-adenosine-phospho-ribonucleoside in mRNA + (R)-4'-phosphopantetheine + 2 H(+). Functionally, RNA-binding and decapping enzyme that catalyzes the cleavage of the cap structure of snoRNAs and mRNAs in a metal-dependent manner. Part of the U8 snoRNP complex that is required for the accumulation of mature 5.8S and 28S rRNA. Has diphosphatase activity and removes m7G and/or m227G caps from U8 snoRNA and leaves a 5'monophosphate on the RNA. Also catalyzes the cleavage of the cap structure on mRNAs. Does not hydrolyze cap analog structures like 7-methylguanosine nucleoside triphosphate (m7GpppG). Also hydrolysis m7G- and m227G U3-capped RNAs but with less efficiencies. Has broad substrate specificity with manganese or cobalt as cofactor and can act on various RNA species. Binds to the U8 snoRNA; metal is not required for RNA-binding. May play a role in the regulation of snoRNAs and mRNAs degradation. Also acts as a phosphatase; hydrolyzes the non-canonical purine nucleotides inosine diphosphate (IDP) and deoxyinosine diphosphate (dITP) as well as guanosine diphosphate (GDP), deoxyguanosine diphosphate (dGDP), xanthine diphosphate (XDP), inosine triphosphate (ITP) and deoxyinosine triphosphate (ITP) to their respective monophosphate derivatives and does not distinguish between the deoxy- and ribose forms. The order of activity with different substrates is IDP &gt; dIDP &gt;&gt; GDP = dGDP &gt; XDP = ITP = dITP. Binds strongly to GTP, ITP and XTP. Participates in the hydrolysis of dIDP/IDP and probably excludes non-canonical purines from RNA and DNA precursor pools, thus preventing their incorporation into RNA and DNA and avoiding chromosomal lesions. Exhibits decapping activity towards NAD-capped RNAs and FAD-capped RNAs. Exhibits decapping activity towards dpCoA-capped RNAs in vitro. The polypeptide is U8 snoRNA-decapping enzyme (nudt16) (Xenopus laevis (African clawed frog)).